The following is a 39-amino-acid chain: MTIDRTYPIFTVRWLAVHGLAIPTVFFLGSISAMQFIQR.

A helical membrane pass occupies residues 14-30; the sequence is WLAVHGLAIPTVFFLGS. Residue His-18 coordinates heme.

It belongs to the PsbE/PsbF family. Heterodimer of an alpha subunit and a beta subunit. PSII is composed of 1 copy each of membrane proteins PsbA, PsbB, PsbC, PsbD, PsbE, PsbF, PsbH, PsbI, PsbJ, PsbK, PsbL, PsbM, PsbT, PsbX, PsbY, PsbZ, Psb30/Ycf12, at least 3 peripheral proteins of the oxygen-evolving complex and a large number of cofactors. It forms dimeric complexes. Heme b serves as cofactor.

It localises to the plastid membrane. Its function is as follows. This b-type cytochrome is tightly associated with the reaction center of photosystem II (PSII). PSII is a light-driven water:plastoquinone oxidoreductase that uses light energy to abstract electrons from H(2)O, generating O(2) and a proton gradient subsequently used for ATP formation. It consists of a core antenna complex that captures photons, and an electron transfer chain that converts photonic excitation into a charge separation. The polypeptide is Cytochrome b559 subunit beta (Cuscuta gronovii (Common dodder)).